The primary structure comprises 363 residues: Chorismate synthase (363 aa).

The NADP(+) site is built by Arg48 and Arg54. FMN is bound by residues 131–133, 244–245, Gly288, 303–307, and Arg329; these read RSS, NA, and KPTSS.

Belongs to the chorismate synthase family. As to quaternary structure, homotetramer. Requires FMNH2 as cofactor.

The enzyme catalyses 5-O-(1-carboxyvinyl)-3-phosphoshikimate = chorismate + phosphate. It participates in metabolic intermediate biosynthesis; chorismate biosynthesis; chorismate from D-erythrose 4-phosphate and phosphoenolpyruvate: step 7/7. Functionally, catalyzes the anti-1,4-elimination of the C-3 phosphate and the C-6 proR hydrogen from 5-enolpyruvylshikimate-3-phosphate (EPSP) to yield chorismate, which is the branch point compound that serves as the starting substrate for the three terminal pathways of aromatic amino acid biosynthesis. This reaction introduces a second double bond into the aromatic ring system. The protein is Chorismate synthase of Hyphomonas neptunium (strain ATCC 15444).